The sequence spans 642 residues: Arginine--tRNA ligase (642 aa).

A 'HIGH' region motif is present at residues 133-143; it reads VNPTKPLHMGH.

Belongs to the class-I aminoacyl-tRNA synthetase family.

The protein resides in the cytoplasm. It catalyses the reaction tRNA(Arg) + L-arginine + ATP = L-arginyl-tRNA(Arg) + AMP + diphosphate. In Thermococcus kodakarensis (strain ATCC BAA-918 / JCM 12380 / KOD1) (Pyrococcus kodakaraensis (strain KOD1)), this protein is Arginine--tRNA ligase.